Reading from the N-terminus, the 483-residue chain is Glutamyl-tRNA(Gln) amidotransferase subunit A (483 aa).

Catalysis depends on charge relay system residues Lys77 and Ser152. Ser176 (acyl-ester intermediate) is an active-site residue.

It belongs to the amidase family. GatA subfamily. Heterotrimer of A, B and C subunits.

The enzyme catalyses L-glutamyl-tRNA(Gln) + L-glutamine + ATP + H2O = L-glutaminyl-tRNA(Gln) + L-glutamate + ADP + phosphate + H(+). Its function is as follows. Allows the formation of correctly charged Gln-tRNA(Gln) through the transamidation of misacylated Glu-tRNA(Gln) in organisms which lack glutaminyl-tRNA synthetase. The reaction takes place in the presence of glutamine and ATP through an activated gamma-phospho-Glu-tRNA(Gln). This chain is Glutamyl-tRNA(Gln) amidotransferase subunit A, found in Listeria monocytogenes serovar 1/2a (strain ATCC BAA-679 / EGD-e).